The primary structure comprises 881 residues: Alanine--tRNA ligase (881 aa).

Residues histidine 566, histidine 570, cysteine 668, and histidine 672 each coordinate Zn(2+).

Belongs to the class-II aminoacyl-tRNA synthetase family. Zn(2+) is required as a cofactor.

The protein resides in the cytoplasm. It catalyses the reaction tRNA(Ala) + L-alanine + ATP = L-alanyl-tRNA(Ala) + AMP + diphosphate. Its function is as follows. Catalyzes the attachment of alanine to tRNA(Ala) in a two-step reaction: alanine is first activated by ATP to form Ala-AMP and then transferred to the acceptor end of tRNA(Ala). Also edits incorrectly charged Ser-tRNA(Ala) and Gly-tRNA(Ala) via its editing domain. This Frankia casuarinae (strain DSM 45818 / CECT 9043 / HFP020203 / CcI3) protein is Alanine--tRNA ligase.